Consider the following 180-residue polypeptide: Large ribosomal subunit protein uL5 (180 aa).

Belongs to the universal ribosomal protein uL5 family. In terms of assembly, part of the 50S ribosomal subunit; part of the 5S rRNA/L5/L18/L25 subcomplex. Contacts the 5S rRNA and the P site tRNA. Forms a bridge to the 30S subunit in the 70S ribosome.

Functionally, this is one of the proteins that bind and probably mediate the attachment of the 5S RNA into the large ribosomal subunit, where it forms part of the central protuberance. In the 70S ribosome it contacts protein S13 of the 30S subunit (bridge B1b), connecting the 2 subunits; this bridge is implicated in subunit movement. Contacts the P site tRNA; the 5S rRNA and some of its associated proteins might help stabilize positioning of ribosome-bound tRNAs. The protein is Large ribosomal subunit protein uL5 of Chloroflexus aggregans (strain MD-66 / DSM 9485).